We begin with the raw amino-acid sequence, 594 residues long: Potassium-transporting ATPase potassium-binding subunit (594 aa).

10 helical membrane-spanning segments follow: residues 3–23, 67–87, 136–156, 179–199, 287–307, 314–334, 415–435, 453–473, 519–539, and 562–582; these read ADFL…APLL, AVAM…LQRL, ALTV…IALV, LYVL…QGVV, LEML…GEMV, VAIL…AAYF, GLYG…LMIG, VALV…VAVL, VLLG…ILAL, and LFVA…YVPA.

It belongs to the KdpA family. The system is composed of three essential subunits: KdpA, KdpB and KdpC.

It localises to the cell inner membrane. Its function is as follows. Part of the high-affinity ATP-driven potassium transport (or Kdp) system, which catalyzes the hydrolysis of ATP coupled with the electrogenic transport of potassium into the cytoplasm. This subunit binds the periplasmic potassium ions and delivers the ions to the membrane domain of KdpB through an intramembrane tunnel. The polypeptide is Potassium-transporting ATPase potassium-binding subunit (Bordetella pertussis (strain Tohama I / ATCC BAA-589 / NCTC 13251)).